We begin with the raw amino-acid sequence, 132 residues long: Small ribosomal subunit protein uS8 (132 aa).

The protein belongs to the universal ribosomal protein uS8 family. Part of the 30S ribosomal subunit. Contacts proteins S5 and S12.

Its function is as follows. One of the primary rRNA binding proteins, it binds directly to 16S rRNA central domain where it helps coordinate assembly of the platform of the 30S subunit. The sequence is that of Small ribosomal subunit protein uS8 from Streptococcus sanguinis (strain SK36).